The sequence spans 442 residues: Putative neutral sphingomyelinase (442 aa).

Position 46 (Glu46) interacts with Mg(2+). The active-site Proton acceptor is His264. The segment at 309-330 (ALTGEDDQSSQHQPEIQCNGSS) is disordered. Over residues 318 to 330 (SQHQPEIQCNGSS) the composition is skewed to polar residues. 2 consecutive transmembrane segments (helical) span residues 362–384 (RILY…EFTA) and 391–413 (IFLL…ASIW).

This sequence belongs to the neutral sphingomyelinase family.

It is found in the membrane. It carries out the reaction a sphingomyelin + H2O = phosphocholine + an N-acylsphing-4-enine + H(+). Its pathway is lipid metabolism; sphingolipid metabolism. The chain is Putative neutral sphingomyelinase from Drosophila melanogaster (Fruit fly).